The primary structure comprises 423 residues: 3-phosphoshikimate 1-carboxyvinyltransferase (423 aa).

3-phosphoshikimate is bound by residues lysine 20, serine 21, and arginine 25. Lysine 20 is a binding site for phosphoenolpyruvate. 2 residues coordinate phosphoenolpyruvate: glycine 91 and arginine 119. 3-phosphoshikimate contacts are provided by threonine 163, serine 164, glutamine 165, aspartate 305, glutamine 328, and lysine 332. Position 165 (glutamine 165) interacts with phosphoenolpyruvate. The active-site Proton acceptor is aspartate 305. Positions 336 and 377 each coordinate phosphoenolpyruvate.

It belongs to the EPSP synthase family. Monomer.

It localises to the cytoplasm. It catalyses the reaction 3-phosphoshikimate + phosphoenolpyruvate = 5-O-(1-carboxyvinyl)-3-phosphoshikimate + phosphate. Its pathway is metabolic intermediate biosynthesis; chorismate biosynthesis; chorismate from D-erythrose 4-phosphate and phosphoenolpyruvate: step 6/7. In terms of biological role, catalyzes the transfer of the enolpyruvyl moiety of phosphoenolpyruvate (PEP) to the 5-hydroxyl of shikimate-3-phosphate (S3P) to produce enolpyruvyl shikimate-3-phosphate and inorganic phosphate. The sequence is that of 3-phosphoshikimate 1-carboxyvinyltransferase from Acetivibrio thermocellus (strain ATCC 27405 / DSM 1237 / JCM 9322 / NBRC 103400 / NCIMB 10682 / NRRL B-4536 / VPI 7372) (Clostridium thermocellum).